The chain runs to 361 residues: MESGHRFDAQTLHSFIQAVFRQMGSEEQEAKLVADHLIAANLAGHDSHGIGMIPSYVRSWSQGHLQINHHAKTVKEAGAAVTLDGDRAFGQVAAHEAMALGIEKAHQHGIAAVALHNSHHIGRIGYWAEQCAAAGFVSIHFVSVVGIPMVAPFHGRDSRFGTNPFCVVFPRKDNFPLLLDYATSAIAFGKTRVAWHKGVPVPPGCLIDVNGVPTTNPAVMQESPLGSLLTFAEHKGYALAAMCEILGGALSGGKTTHQETLQTSPDAILNCMTTIIINPELFGAPDCNAQTEAFAEWVKASPHDDDKPILLPGEWEVNTRRERQKQGIPLDAGSWQAICDAARQIGMPEETLQAFCQQLAS.

Residues H48, G122 to I124, L178 to A182, H234, N270, and G313 to E316 contribute to the NAD(+) site.

This sequence belongs to the LDH2/MDH2 oxidoreductase family.

The enzyme catalyses 2-hydroxyglutarate + NADP(+) = 2-oxoglutarate + NADPH + H(+). The catalysed reaction is 2-hydroxyglutarate + NAD(+) = 2-oxoglutarate + NADH + H(+). It catalyses the reaction 3-phenyllactate + NADP(+) = 3-phenylpyruvate + NADPH + H(+). It carries out the reaction 3-phenyllactate + NAD(+) = 3-phenylpyruvate + NADH + H(+). The enzyme catalyses (2R)-2-hydroxy-3-(4-hydroxyphenyl)propanoate + NAD(+) = 3-(4-hydroxyphenyl)pyruvate + NADH + H(+). The catalysed reaction is (2R)-2-hydroxy-3-(4-hydroxyphenyl)propanoate + NADP(+) = 3-(4-hydroxyphenyl)pyruvate + NADPH + H(+). It catalyses the reaction (2R)-3-(3,4-dihydroxyphenyl)lactate + NADP(+) = 3-(3,4-dihydroxyphenyl)pyruvate + NADPH + H(+). It carries out the reaction (2R)-3-(3,4-dihydroxyphenyl)lactate + NAD(+) = 3-(3,4-dihydroxyphenyl)pyruvate + NADH + H(+). Its function is as follows. Catalyzes the NAD(P)H-dependent reduction of 2-oxoglutarate, phenylpyruvate and (4-hydroxyphenyl)pyruvate, leading to the respective 2-hydroxycarboxylate in vitro. Shows a preference for NADPH over NADH as a redox partner. Do not catalyze the reverse reactions. This Escherichia coli (strain K12) protein is Hydroxycarboxylate dehydrogenase B.